The sequence spans 147 residues: UPF0179 protein MTH_609 (147 aa).

This sequence belongs to the UPF0179 family.

The protein is UPF0179 protein MTH_609 of Methanothermobacter thermautotrophicus (strain ATCC 29096 / DSM 1053 / JCM 10044 / NBRC 100330 / Delta H) (Methanobacterium thermoautotrophicum).